Here is a 127-residue protein sequence, read N- to C-terminus: Large ribosomal subunit protein bL12 (127 aa).

It belongs to the bacterial ribosomal protein bL12 family. Homodimer. Part of the ribosomal stalk of the 50S ribosomal subunit. Forms a multimeric L10(L12)X complex, where L10 forms an elongated spine to which 2 to 4 L12 dimers bind in a sequential fashion. Binds GTP-bound translation factors.

In terms of biological role, forms part of the ribosomal stalk which helps the ribosome interact with GTP-bound translation factors. Is thus essential for accurate translation. This chain is Large ribosomal subunit protein bL12, found in Rhizobium etli (strain CIAT 652).